The chain runs to 160 residues: Phosphopantetheine adenylyltransferase (160 aa).

A substrate-binding site is contributed by Thr-11. ATP is bound by residues 11–12 (TF) and His-19. Substrate is bound by residues Lys-43, Leu-75, and Arg-89. Residues 90-92 (GLR), Glu-100, and 125-131 (HMFVSAS) contribute to the ATP site.

This sequence belongs to the bacterial CoaD family. As to quaternary structure, homohexamer. The cofactor is Mg(2+).

The protein localises to the cytoplasm. The catalysed reaction is (R)-4'-phosphopantetheine + ATP + H(+) = 3'-dephospho-CoA + diphosphate. Its pathway is cofactor biosynthesis; coenzyme A biosynthesis; CoA from (R)-pantothenate: step 4/5. In terms of biological role, reversibly transfers an adenylyl group from ATP to 4'-phosphopantetheine, yielding dephospho-CoA (dPCoA) and pyrophosphate. This chain is Phosphopantetheine adenylyltransferase, found in Methylobacillus flagellatus (strain ATCC 51484 / DSM 6875 / VKM B-1610 / KT).